A 215-amino-acid chain; its full sequence is Thiamine import ATP-binding protein ThiQ (215 aa).

The ABC transporter domain occupies 2–215 (IYLNNVILND…GQISQLQKGV (214 aa)). 32 to 39 (GESGAGKS) is an ATP binding site.

This sequence belongs to the ABC transporter superfamily. Thiamine importer (TC 3.A.1.19.1) family. As to quaternary structure, the complex is composed of two ATP-binding proteins (ThiQ), two transmembrane proteins (ThiP) and a solute-binding protein (ThiB).

The protein localises to the cell inner membrane. It catalyses the reaction thiamine(out) + ATP + H2O = thiamine(in) + ADP + phosphate + H(+). Its function is as follows. Part of the ABC transporter complex ThiBPQ involved in thiamine import. Responsible for energy coupling to the transport system. This is Thiamine import ATP-binding protein ThiQ from Haemophilus influenzae (strain 86-028NP).